The primary structure comprises 187 residues: Coiled-coil domain-containing protein 201 (187 aa).

2 disordered regions span residues 1–79 (MEPG…PPAT) and 92–159 (KESS…RAAA). The stretch at 111–131 (LTQRQRQRQQQQQQQESLRAK) forms a coiled coil. Over residues 147 to 157 (GRKRRDPKKRA) the composition is skewed to basic residues.

This chain is Coiled-coil domain-containing protein 201, found in Homo sapiens (Human).